Consider the following 780-residue polypeptide: Vacuolar protein sorting-associated protein 51 homolog (780 aa).

Ala-2 bears the N-acetylalanine mark. Disordered stretches follow at residues Ser-270–Ile-292 and Gln-615–Gln-651. The span at Val-273–Ser-284 shows a compositional bias: acidic residues. A compositionally biased stretch (low complexity) spans Ser-626–Thr-639.

Belongs to the VPS51 family. As to quaternary structure, component of the Golgi-associated retrograde protein (GARP) complex, composed by VPS51, VPS52, VPS53 and VPS54. Component of the endosome-associated retrograde protein (EARP) complex, composed of VPS51, VPS52, VPS53 and VPS50. Interacts with VPS52. Expressed in primary and lateral roots, shoots of seedlings and flowers.

The protein localises to the golgi apparatus. Its subcellular location is the trans-Golgi network. The protein resides in the recycling endosome. It is found in the prevacuolar compartment. Acts as a component of the GARP complex that is involved in retrograde transport from early and late endosomes to the trans-Golgi network (TGN). The GARP complex is required for the maintenance of protein retrieval from endosomes to the TGN, acid hydrolase sorting, lysosome function, endosomal cholesterol traffic and autophagy. VPS51 participates in retrograde transport of acid hydrolase receptors, likely by promoting tethering and SNARE-dependent fusion of endosome-derived carriers to the TGN. Acts as a component of the EARP complex that is involved in endocytic recycling. The EARP complex associates with Rab4-positive endosomes and promotes recycling of internalized transferrin receptor (TFRC) to the plasma membrane. Required for vacuolar targeting and cellular trafficking. Involved in the regulation of vascular tissue patterning, probably by regulating PIN1 expression pattern, thus modulating auxin flux. Important to prevent PIN1 accumulation within margin cells, possibly by targeting PIN1 to the lytic vacuole. Regulates PIN1 and ATHB8 expression pattern in secondary veins. The sequence is that of Vacuolar protein sorting-associated protein 51 homolog from Arabidopsis thaliana (Mouse-ear cress).